The primary structure comprises 153 residues: Pheromone-binding protein Gp-9 (153 aa).

The signal sequence occupies residues 1-19 (MKTFVLHIFIFAFVAFASA). Intrachain disulfides connect Cys-37–Cys-77, Cys-73–Cys-129, and Cys-118–Cys-138.

This sequence belongs to the PBP/GOBP family. As to quaternary structure, homodimer.

It is found in the secreted. Colony queen number, a major feature of social organization, is associated with worker genotype for Gp-9. Colonies are headed by either a single reproductive queen (monogyne form) or multiple queens (polygyne form). Differences in worker Gp-9 genotypes between social forms may cause differences in workers' abilities to recognize queens and regulate their numbers. The protein is Pheromone-binding protein Gp-9 of Solenopsis amblychila (Desert fire ant).